The following is a 910-amino-acid chain: Auxilin (910 aa).

Tandem repeats lie at residues 33–36, 37–40, and 41–44. Residues 33–44 form a 3 X 4 AA approximate tandem repeats region; the sequence is NLKDNLKDTLKD. The Phosphatase tensin-type domain occupies 52-219; it reads SVTSYTKGDL…GYMCDLLADK (168 aa). Ser109 carries the phosphoserine modification. The active-site Phosphocysteine intermediate is the Cys161. The C2 tensin-type domain maps to 225–363; the sequence is FKPLTIKSIT…FQVTLDVELQ (139 aa). The short motif at 406 to 414 is the SH3-binding element; it reads PIDIPPDNP. The tract at residues 448–772 is disordered; the sequence is QESEQSDDEL…RGKAAANLEG (325 aa). A phosphoserine mark is found at Ser450, Ser453, Ser560, and Ser567. Positions 547–569 are enriched in low complexity; the sequence is PSGPTSTQSTPRRSATSTSASPT. Positions 596-626 are enriched in polar residues; that stretch reads FLNTASASSDPFLQPTRSPSPTVHASSTPAV. Over residues 651–666 the composition is skewed to low complexity; sequence SAATSPTGSSHGTPTH. A compositionally biased stretch (gly residues) spans 715–725; that stretch reads MGGGWQQGGGY. Polar residues predominate over residues 732–758; that stretch reads SKPQSSMPHSSPQNRPNYNVSFSSMPG. Residues 846-910 enclose the J domain; that stretch reads TKWKPVGMAD…FENQGQKPLY (65 aa).

In terms of assembly, forms a complex composed of HSPA8, CLTC and DNAJC6. Interacts with HSPA8/HSC70 in an ATP-dependent manner; this interaction stimulates the HSPA8's ATPase activity. Interacts with CLTC; this interaction produces a local change in heavy-chain contacts, creating a detectable global distortion of the clathrin coat. Interacts with AP2A2. Interacts with DNM1(GTP-bound form); this interaction allows clathrin-coated vesicle (CCV) formation at the plasma membrane. Post-translationally, the N-terminus is blocked. In terms of processing, phosphorylation at Ser-567 modulates its ability to bind CLTC and therefore the synaptic vesicle endocytosis (SVE). In terms of tissue distribution, brain.

It is found in the cytoplasmic vesicle. The protein localises to the clathrin-coated vesicle. Functionally, may act as a protein phosphatase and/or a lipid phosphatase. Co-chaperone that recruits HSPA8/HSC70 to clathrin-coated vesicles (CCVs) and promotes the ATP-dependent dissociation of clathrin from CCVs and participates in clathrin-mediated endocytosis of synaptic vesicles and their recycling and also in intracellular trafficking. Firstly, binds tightly to the clathrin cages, at a ratio of one DNAJC6 per clathrin triskelion. The HSPA8:ATP complex then binds to the clathrin-auxilin cage, initially at a ratio of one HSPA8 per triskelion leading to ATP hydrolysis stimulation and causing a conformational change in the HSPA8. This cycle is repeated three times to drive to a complex containing the clathrin-auxilin cage associated to three HSPA8:ADP complex. The ATP hydrolysis of the third HSPA8:ATP complex leads to a concerted dismantling of the cage into component triskelia. Then, dissociates from the released triskelia and be recycled to initiate another cycle of HSPA8's recruitment. Also acts during the early steps of clathrin-coated vesicle (CCV) formation through its interaction with the GTP bound form of DNM1. This Bos taurus (Bovine) protein is Auxilin.